Here is a 759-residue protein sequence, read N- to C-terminus: Arylphorin subunit C223 (759 aa).

A signal peptide spans methionine 1–alanine 15.

It belongs to the hemocyanin family. In terms of assembly, heterohexamer. In terms of tissue distribution, fat body.

Its subcellular location is the secreted. It localises to the extracellular space. Its function is as follows. Arylphorin is a larval storage protein (LSP) which may serve as a storage protein used primarily as a source of aromatic amino acids for protein synthesis during metamorphosis. It is a constituent of the sclerotizing system of the cuticle, and serves as a carrier for ecdysteroid hormone. The polypeptide is Arylphorin subunit C223 (Calliphora vicina (Blue blowfly)).